The sequence spans 808 residues: Piwi-like protein 1 (808 aa).

The region spanning 214 to 333 is the PAZ domain; it reads RINRVLNENN…IPGELCYLCG (120 aa). The disordered stretch occupies residues 300–322; sequence SMVRPKEKTENEPEGPTETDQSL. In terms of domain architecture, Piwi spans 492–790; sequence HMALVFIPDD…LAELVGKIHR (299 aa).

It belongs to the argonaute family. Piwi subfamily. Expressed in dividing adult somatic stem cells (neoblasts).

This is Piwi-like protein 1 (wi-1) from Schmidtea mediterranea (Freshwater planarian flatworm).